Reading from the N-terminus, the 995-residue chain is MAGKARVHELAKELGVESKTVLAKLKEMGEFVKSASSTVEAPVARRLRNAFVNNAGSPAPAAPPAVAPPTPTPTPPRTPTPAPPPGGPRVSAKPMPPRRQGVPTPGPKPKGPVPGPPQSATPVTKPASAHDIEVAAAEARAAALKAEQEAAVKAAQAARQQQRENVRREPPTEGGPRPGPRPGPGTMPPRPGSPAAGRSGAPAPGPGPRPGGRPPARGAGNNPFGIQGGQQRPPAAGAGGPRPSPASMPPRPSPASMPPRPSPASMPSQRPGRPGGPGSGRPGSGAGRPGGGGGGGYRGGGGGGGGGGYRGGPGGGGGGGGGFRGGPGGGGGGFRSGPGGGGRPGGGGRGRGGGAAGAFGRPGGRPTRGRKSKKQRRQEFDNLSAPTMSSGAPRGQGQVVRLSRGASLSDFADKINANPGSLVQEMFNLGEMVTATQSCSDDTLLLLGEHLGFAVQIVSPEDEDRELLAQFNIDLDAEVAEDRLVSRPPVVTVMGHVDHGKTKLLDAIRKANVVAGEAGGITQHIGAYQVHVPHDGEDRAITFIDTPGHEAFTAMRARGAQVTDIVILVVAADDGVMPQTIEALNHAKAAEVPIVVAVNKIDKPEANPDKVRQQLTEYGLVAEEYGGDTMFVNVAAKPGTGIESLLEAVLLTADASLELTAPTDGPAQGVAIEAHLDKGRGAVATVLVQKGTLRAGDSIVAGGAHGRVRAMLDENGNQVAEAGPSRPVLVLGLTAVPGAGDTFLAAEDDRTVRQIAEQRQARRRAAAFANSRGRATLETLMEQLKAGEKTSLNLVLKGDVSGSVEALEDALFNLDIPEEVQLRIIHRGVGSITESDVMLASASSEAVTIIGFNVRAANKVREMADREGVEIRYYTVIYQAIEEIEAALKGLLKPEYEEVELGTAEVREVFRSSKVGNISGCIVRSGLIRRNAKARLLRDGAVVADNLTIGSLKRFKDDATEVREGFECGLTLGGYNNVQVGDVIETFEMREKARA.

Residues 53–399 (NNAGSPAPAA…SGAPRGQGQV (347 aa)) form a disordered region. Pro residues-rich tracts occupy residues 60 to 87 (PAAPPAVAPPTPTPTPPRTPTPAPPPGG) and 104 to 119 (TPGPKPKGPVPGPPQS). A compositionally biased stretch (low complexity) spans 135–160 (AAAEARAAALKAEQEAAVKAAQAARQ). Basic and acidic residues predominate over residues 161–171 (QQRENVRREPP). Over residues 177–192 (RPGPRPGPGTMPPRPG) the composition is skewed to pro residues. Positions 193–202 (SPAAGRSGAP) are enriched in low complexity. Composition is skewed to pro residues over residues 203–213 (APGPGPRPGGR) and 242–264 (RPSPASMPPRPSPASMPPRPSPA). A compositionally biased stretch (gly residues) spans 273-363 (RPGGPGSGRP…GAAGAFGRPG (91 aa)). The span at 367-376 (TRGRKSKKQR) shows a compositional bias: basic residues. A tr-type G domain is found at 486–658 (SRPPVVTVMG…VLLTADASLE (173 aa)). Residues 495–502 (GHVDHGKT) form a G1 region. 495 to 502 (GHVDHGKT) provides a ligand contact to GTP. Residues 520-524 (GITQH) form a G2 region. The segment at 545 to 548 (DTPG) is G3. Residues 545-549 (DTPGH) and 599-602 (NKID) each bind GTP. The segment at 599 to 602 (NKID) is G4. The tract at residues 635-637 (AAK) is G5.

It belongs to the TRAFAC class translation factor GTPase superfamily. Classic translation factor GTPase family. IF-2 subfamily.

It localises to the cytoplasm. Its function is as follows. One of the essential components for the initiation of protein synthesis. Protects formylmethionyl-tRNA from spontaneous hydrolysis and promotes its binding to the 30S ribosomal subunits. Also involved in the hydrolysis of GTP during the formation of the 70S ribosomal complex. The sequence is that of Translation initiation factor IF-2 from Salinispora arenicola (strain CNS-205).